Consider the following 986-residue polypeptide: DNA polymerase I (986 aa).

Residues 1 to 303 (MFMSAKSPLL…RTFIDKIQAF (303 aa)) form the 5'-3' exonuclease domain. The region spanning 304–592 (HRNFSDNQSP…MEDRGIRIDC (289 aa)) is the 3'-5' exonuclease domain. The interval 308-327 (SDNQSPVPMGNEADNGEPKK) is disordered. Positions 593–986 (DYLQTLSQQL…HRGSNWMEAK (394 aa)) are polymerase.

It belongs to the DNA polymerase type-A family. As to quaternary structure, single-chain monomer with multiple functions.

The catalysed reaction is DNA(n) + a 2'-deoxyribonucleoside 5'-triphosphate = DNA(n+1) + diphosphate. In addition to polymerase activity, this DNA polymerase exhibits 3'-5' and 5'-3' exonuclease activity. This chain is DNA polymerase I (polA), found in Synechocystis sp. (strain ATCC 27184 / PCC 6803 / Kazusa).